The following is a 477-amino-acid chain: Putative BTB/POZ domain-containing protein R830 (477 aa).

The BTB domain occupies 13-83 (SDLELILVDK…FYGIETNNDP (71 aa)).

This sequence belongs to the mimivirus BTB/WD family.

This chain is Putative BTB/POZ domain-containing protein R830, found in Acanthamoeba polyphaga mimivirus (APMV).